We begin with the raw amino-acid sequence, 410 residues long: Tryptophan synthase beta chain (410 aa).

Position 99 is an N6-(pyridoxal phosphate)lysine (lysine 99).

The protein belongs to the TrpB family. As to quaternary structure, tetramer of two alpha and two beta chains. Pyridoxal 5'-phosphate is required as a cofactor.

The enzyme catalyses (1S,2R)-1-C-(indol-3-yl)glycerol 3-phosphate + L-serine = D-glyceraldehyde 3-phosphate + L-tryptophan + H2O. It participates in amino-acid biosynthesis; L-tryptophan biosynthesis; L-tryptophan from chorismate: step 5/5. Its function is as follows. The beta subunit is responsible for the synthesis of L-tryptophan from indole and L-serine. The protein is Tryptophan synthase beta chain of Pseudomonas fluorescens (strain Pf0-1).